We begin with the raw amino-acid sequence, 2070 residues long: HEAT repeat-containing protein 5B (2070 aa).

3 HEAT repeats span residues 848–885, 1062–1099, and 1290–1327; these read EVRKSALTLVMGALDNPNPILRCAAGEALGRMAQVVGE, VNLSSLVPSLCVHLCSSHLLLRRAAVACLRQLAQREAA, and LHLSDLIRMAFMAATDHSNQLRMAGLQALEDIIKKFAS. Residue Ser-1737 is modified to Phosphoserine.

This sequence belongs to the HEATR5 family. In terms of assembly, self-associates. Component of the aftiphilin/p200/gamma-synergin complex, at least composed of AFTPH/aftiphilin, HEATR5B/p200a and SYNRG/gamma-synergin, which plays a role in the AP1G1/AP-1-mediated protein trafficking from early to recycling endosomes and between the trans-Golgi network (TGN) and endosomes. Within the complex interacts with AFTPH/aftiphilin and SYNRG/gamma-synergin; the interactions are direct. Interacts with GGA1.

The protein resides in the cytoplasm. Its subcellular location is the perinuclear region. It is found in the cytoplasmic vesicle. It localises to the clathrin-coated vesicle. In terms of biological role, component of clathrin-coated vesicles. Component of the aftiphilin/p200/gamma-synergin complex, which plays roles in AP1G1/AP-1-mediated protein trafficking including the trafficking of transferrin from early to recycling endosomes, and the membrane trafficking of furin and the lysosomal enzyme cathepsin D between the trans-Golgi network (TGN) and endosomes. The polypeptide is HEAT repeat-containing protein 5B (Heatr5b) (Mus musculus (Mouse)).